The chain runs to 465 residues: ATP synthase subunit beta 2 (465 aa).

148–155 (GGAGVGKT) is a binding site for ATP.

The protein belongs to the ATPase alpha/beta chains family. F-type ATPases have 2 components, CF(1) - the catalytic core - and CF(0) - the membrane proton channel. CF(1) has five subunits: alpha(3), beta(3), gamma(1), delta(1), epsilon(1). CF(0) has three main subunits: a(1), b(2) and c(9-12). The alpha and beta chains form an alternating ring which encloses part of the gamma chain. CF(1) is attached to CF(0) by a central stalk formed by the gamma and epsilon chains, while a peripheral stalk is formed by the delta and b chains.

It localises to the cell inner membrane. The catalysed reaction is ATP + H2O + 4 H(+)(in) = ADP + phosphate + 5 H(+)(out). Produces ATP from ADP in the presence of a proton gradient across the membrane. The catalytic sites are hosted primarily by the beta subunits. This is ATP synthase subunit beta 2 from Psychromonas ingrahamii (strain DSM 17664 / CCUG 51855 / 37).